Consider the following 199-residue polypeptide: ATP-dependent Clp protease proteolytic subunit 2 (199 aa).

The Nucleophile role is filled by Ser95. The active site involves His120.

This sequence belongs to the peptidase S14 family. In terms of assembly, fourteen ClpP subunits assemble into 2 heptameric rings which stack back to back to give a disk-like structure with a central cavity, resembling the structure of eukaryotic proteasomes.

It localises to the cytoplasm. It catalyses the reaction Hydrolysis of proteins to small peptides in the presence of ATP and magnesium. alpha-casein is the usual test substrate. In the absence of ATP, only oligopeptides shorter than five residues are hydrolyzed (such as succinyl-Leu-Tyr-|-NHMec, and Leu-Tyr-Leu-|-Tyr-Trp, in which cleavage of the -Tyr-|-Leu- and -Tyr-|-Trp bonds also occurs).. Cleaves peptides in various proteins in a process that requires ATP hydrolysis. Has a chymotrypsin-like activity. Plays a major role in the degradation of misfolded proteins. The protein is ATP-dependent Clp protease proteolytic subunit 2 of Mycolicibacterium paratuberculosis (strain ATCC BAA-968 / K-10) (Mycobacterium paratuberculosis).